A 41-amino-acid chain; its full sequence is Virescein (41 aa).

H41 is subject to Histidine amide.

In terms of assembly, monomer. Hemolymph.

The protein localises to the secreted. Functionally, has antibacterial activity against Gram-positive and Gram-negative bacteria. This chain is Virescein, found in Heliothis virescens (Tobacco budworm moth).